The chain runs to 321 residues: uncharacterized protein (321 aa).

It belongs to the NAD(P)-dependent epimerase/dehydratase family.

This is an uncharacterized protein from Staphylococcus aureus (strain MRSA252).